Here is a 270-residue protein sequence, read N- to C-terminus: MTTKVRVAVVGASGRMGRVLIEAAKHQDVITLGAAIERQGSTLIGADAGELAGVGCVNVAICDSLDNVKDDFDVLIDFTSPDASMLHLEWCLRHKKPMVIGTTGFNHAQKEQISACAEQIPVVFSPNMSVGVNLMWKLLEVATAVMGQDTDIEIIEAHHRHKKDAPSGTALKMGEIIANTLGRDLEECAVYGREGITGARDRNTIGFSTIRAGDIVGEHTAMFADIGERIEITHKASSRMTYANGAMRAAFWLYDQNAGLYDMQQVLGLS.

Residues 11–16 (GASGRM) and glutamate 37 contribute to the NAD(+) site. Arginine 38 is an NADP(+) binding site. NAD(+) contacts are provided by residues 101–103 (GTT) and 125–128 (SPNM). Histidine 158 (proton donor/acceptor) is an active-site residue. Histidine 159 contacts (S)-2,3,4,5-tetrahydrodipicolinate. The Proton donor role is filled by lysine 162. Residue 168–169 (GT) participates in (S)-2,3,4,5-tetrahydrodipicolinate binding.

This sequence belongs to the DapB family.

It localises to the cytoplasm. The catalysed reaction is (S)-2,3,4,5-tetrahydrodipicolinate + NAD(+) + H2O = (2S,4S)-4-hydroxy-2,3,4,5-tetrahydrodipicolinate + NADH + H(+). The enzyme catalyses (S)-2,3,4,5-tetrahydrodipicolinate + NADP(+) + H2O = (2S,4S)-4-hydroxy-2,3,4,5-tetrahydrodipicolinate + NADPH + H(+). It functions in the pathway amino-acid biosynthesis; L-lysine biosynthesis via DAP pathway; (S)-tetrahydrodipicolinate from L-aspartate: step 4/4. Functionally, catalyzes the conversion of 4-hydroxy-tetrahydrodipicolinate (HTPA) to tetrahydrodipicolinate. The chain is 4-hydroxy-tetrahydrodipicolinate reductase from Shewanella denitrificans (strain OS217 / ATCC BAA-1090 / DSM 15013).